We begin with the raw amino-acid sequence, 70 residues long: Putative RNA-binding protein YbcJ (70 aa).

In terms of domain architecture, S4 RNA-binding spans 12-68; that stretch reads VELCDLLKLEGWSESGAQAKIAIAEGQVKVDGAVETRKRCKIVAGQTVSFAGHSVQV.

In pull-down experiments interacts with CedA.

In terms of biological role, its structure and the presence of conserved basic residues indicates that it probably binds RNA. The polypeptide is Putative RNA-binding protein YbcJ (ybcJ) (Escherichia coli (strain K12)).